Here is a 398-residue protein sequence, read N- to C-terminus: Phosphoglycerate kinase (398 aa).

Substrate contacts are provided by residues 22-24 (DFN), R38, 61-64 (HLGR), R120, and R153. ATP contacts are provided by residues K206, G297, E328, and 354-357 (GGDT).

This sequence belongs to the phosphoglycerate kinase family. In terms of assembly, monomer.

The protein localises to the cytoplasm. The catalysed reaction is (2R)-3-phosphoglycerate + ATP = (2R)-3-phospho-glyceroyl phosphate + ADP. The protein operates within carbohydrate degradation; glycolysis; pyruvate from D-glyceraldehyde 3-phosphate: step 2/5. The sequence is that of Phosphoglycerate kinase from Nautilia profundicola (strain ATCC BAA-1463 / DSM 18972 / AmH).